The primary structure comprises 427 residues: MDSTQIKQGNLRYLIHLLLASLAGLSIAIIVTHAPVFWRLRSSKNTLDPPGFREGLNMLIPEIHFDAEVQDPLYGEALAALKAASAMKHGGKHSKAVKLFQQAVSLAPHHPEILLQYGEFLEQHDVVQAEHLYNRALTANPLDSRALANRQRALPKVKQLDQEMLDKIDEKRDKLFSIPAGSLPMKRAIKEAYFQHIYHSNAIEGNTMTLSMTRAIVETKMAVPGKSILEHNEVLGLDEALKYVNSTLIQKSESITIDDIIEIHRRVLGHAHPLEAGRYRSTQVFVSDHVPPAPEDLEKQMNAFNDWLLSKDPEILHPIEFAALSHYKLVYIHPFTDGNGRTARLLMNAILMRAGFPPVIIRFQDRHDYYEYLNQANHGDIRPFIRFVARCTERTIDAYLASTTIYPLGHERTRELTDAHDEKDPNR.

Residues 17 to 37 (LLLASLAGLSIAIIVTHAPVF) form a helical membrane-spanning segment. 2 TPR repeats span residues 77–110 (ALAALKAASAMKHGGKHSKAVKLFQQAVSLAPHH) and 111–143 (PEILLQYGEFLEQHDVVQAEHLYNRALTANPLD). The short motif at 200 to 205 (SNAIEG) is the Inhibitory (S/T)XXXE(G/N) motif element. Residues Glu-204 and 286–289 (VSDH) each bind ATP. The Fido domain occupies 255 to 390 (ITIDDIIEIH…IRPFIRFVAR (136 aa)). Residue His-333 is part of the active site. ATP is bound by residues 337-344 (DGNGRTAR), 369-370 (YY), and Asn-377.

The protein belongs to the fic family. As to quaternary structure, homodimer.

The protein localises to the membrane. It carries out the reaction L-tyrosyl-[protein] + ATP = O-(5'-adenylyl)-L-tyrosyl-[protein] + diphosphate. The enzyme catalyses L-threonyl-[protein] + ATP = 3-O-(5'-adenylyl)-L-threonyl-[protein] + diphosphate. The catalysed reaction is 3-O-(5'-adenylyl)-L-threonyl-[protein] + H2O = L-threonyl-[protein] + AMP + H(+). Its activity is regulated as follows. The side chain of Glu-204 determines which of the two opposing activities (AMPylase or de-AMPylase) will take place. In response to endoplasmic reticulum stress, mediates de-AMPylase activity. Adenylyltransferase activity is inhibited by the inhibitory helix present at the N-terminus: Glu-204 binds ATP and competes with ATP-binding at Arg-344, thereby preventing adenylyltransferase activity. In unstressed cells, disengagement of Glu-204 promotes adenylyltransferase activity. Activation dissociates ATP-binding from Glu-204, allowing ordered binding of the entire ATP moiety with the alpha-phosphate in an orientation that is productive for accepting an incoming target hydroxyl side chain. Its function is as follows. Protein that can both mediate the addition of adenosine 5'-monophosphate (AMP) to specific residues of target proteins (AMPylation), and the removal of the same modification from target proteins (de-AMPylation), depending on the context. The side chain of Glu-204 determines which of the two opposing activities (AMPylase or de-AMPylase) will take place. Acts as a key regulator of the unfolded protein response (UPR) by mediating AMPylation or de-AMPylation of Hsc70-3/BiP. In unstressed cells, acts as an adenylyltransferase by mediating AMPylation of Hsc70-3/BiP, thereby inactivating it. In response to endoplasmic reticulum stress, acts as a phosphodiesterase by mediating removal of ATP (de-AMPylation) from Hsc70-3/BiP, leading to restore HSPA5/BiP activity. The sequence is that of Protein adenylyltransferase Fic from Nematostella vectensis (Starlet sea anemone).